The primary structure comprises 126 residues: MLRTMLQGKLHRVKVTQADLHYEGSCAMDQNFMDAAGILEYEAIDIYNVDNGERFSTYAIAAERGSRIISVNGAAARRAAVGDKLIICSYVQIPNEDARHHKPNIAYFDGDNIMRRIAKAVPVQVA.

Serine 25 functions as the Schiff-base intermediate with substrate; via pyruvic acid in the catalytic mechanism. The residue at position 25 (serine 25) is a Pyruvic acid (Ser). Threonine 57 provides a ligand contact to substrate. The Proton donor role is filled by tyrosine 58. Residue 73–75 (GAA) participates in substrate binding.

It belongs to the PanD family. As to quaternary structure, heterooctamer of four alpha and four beta subunits. Requires pyruvate as cofactor. Post-translationally, is synthesized initially as an inactive proenzyme, which is activated by self-cleavage at a specific serine bond to produce a beta-subunit with a hydroxyl group at its C-terminus and an alpha-subunit with a pyruvoyl group at its N-terminus.

Its subcellular location is the cytoplasm. It catalyses the reaction L-aspartate + H(+) = beta-alanine + CO2. The protein operates within cofactor biosynthesis; (R)-pantothenate biosynthesis; beta-alanine from L-aspartate: step 1/1. Its function is as follows. Catalyzes the pyruvoyl-dependent decarboxylation of aspartate to produce beta-alanine. The chain is Aspartate 1-decarboxylase from Photorhabdus laumondii subsp. laumondii (strain DSM 15139 / CIP 105565 / TT01) (Photorhabdus luminescens subsp. laumondii).